Here is a 331-residue protein sequence, read N- to C-terminus: DNA-directed RNA polymerase subunit alpha (331 aa).

An alpha N-terminal domain (alpha-NTD) region spans residues 1–235 (MTMHIRWRGM…KHLNPFVQYR (235 aa)). Residues 255 to 331 (QLEAKLNMTL…GMRVPNQPLF (77 aa)) form an alpha C-terminal domain (alpha-CTD) region.

Belongs to the RNA polymerase alpha chain family. Homodimer. The RNAP catalytic core consists of 2 alpha, 1 beta, 1 beta' and 1 omega subunit. When a sigma factor is associated with the core the holoenzyme is formed, which can initiate transcription.

The catalysed reaction is RNA(n) + a ribonucleoside 5'-triphosphate = RNA(n+1) + diphosphate. In terms of biological role, DNA-dependent RNA polymerase catalyzes the transcription of DNA into RNA using the four ribonucleoside triphosphates as substrates. In Rhodopirellula baltica (strain DSM 10527 / NCIMB 13988 / SH1), this protein is DNA-directed RNA polymerase subunit alpha.